The sequence spans 407 residues: Serine/threonine transporter SstT (407 aa).

The next 9 membrane-spanning stretches (helical) occupy residues 12–32 (GNLI…GISS), 42–62 (LGIL…FILI), 81–101 (IIIL…LANF), 141–161 (ALSS…GIAL), 179–199 (VLKI…GLVA), 218–238 (ILLV…IVFF), 245–267 (FPLI…SSAA), 288–308 (ISIP…IAIL), and 330–350 (IIAT…LLLI).

This sequence belongs to the dicarboxylate/amino acid:cation symporter (DAACS) (TC 2.A.23) family.

It is found in the cell inner membrane. It carries out the reaction L-serine(in) + Na(+)(in) = L-serine(out) + Na(+)(out). The enzyme catalyses L-threonine(in) + Na(+)(in) = L-threonine(out) + Na(+)(out). Involved in the import of serine and threonine into the cell, with the concomitant import of sodium (symport system). This Campylobacter jejuni subsp. jejuni serotype O:6 (strain 81116 / NCTC 11828) protein is Serine/threonine transporter SstT.